The sequence spans 197 residues: MDMQHRIRQLFQASIETKQQALEVLPPYIEQASLVMVNALLNEGKILSCGNGGSAGDAQHFSSELLNRFERERPSLPAVALTTDSSTITSIANDYSYNEVFSKQIRALGQPGDVLLAISTSGNSANVIQAIQAAHDREMLVVALTGRDGGGMASLLLPEDVEIRVPSKITARIQEVHLLAIHCLCDLIDRQLFGSEE.

The SIS domain occupies 36-197 (MVNALLNEGK…IDRQLFGSEE (162 aa)). 51 to 53 (NGG) contributes to the substrate binding site. Zn(2+)-binding residues include His-60 and Glu-64. Substrate contacts are provided by residues Glu-64, 93 to 94 (ND), 119 to 121 (STS), Ser-124, and Gln-174. The Zn(2+) site is built by Gln-174 and His-182.

Belongs to the SIS family. GmhA subfamily. As to quaternary structure, homotetramer. Zn(2+) is required as a cofactor.

It is found in the cytoplasm. It carries out the reaction 2 D-sedoheptulose 7-phosphate = D-glycero-alpha-D-manno-heptose 7-phosphate + D-glycero-beta-D-manno-heptose 7-phosphate. The protein operates within carbohydrate biosynthesis; D-glycero-D-manno-heptose 7-phosphate biosynthesis; D-glycero-alpha-D-manno-heptose 7-phosphate and D-glycero-beta-D-manno-heptose 7-phosphate from sedoheptulose 7-phosphate: step 1/1. Catalyzes the isomerization of sedoheptulose 7-phosphate in D-glycero-D-manno-heptose 7-phosphate. This Pseudomonas aeruginosa (strain LESB58) protein is Phosphoheptose isomerase.